The primary structure comprises 80 residues: RNA-binding protein Hfq (80 aa).

In terms of domain architecture, Sm spans 10–70 (DLFLNTVRKQ…ISTIMPGQPL (61 aa)).

This sequence belongs to the Hfq family. As to quaternary structure, homohexamer.

RNA chaperone that binds small regulatory RNA (sRNAs) and mRNAs to facilitate mRNA translational regulation in response to envelope stress, environmental stress and changes in metabolite concentrations. Also binds with high specificity to tRNAs. In Rhizobium meliloti (strain 1021) (Ensifer meliloti), this protein is RNA-binding protein Hfq.